Here is a 137-residue protein sequence, read N- to C-terminus: uncharacterized protein (137 aa).

Residues 4–118 enclose the CENP-V/GFA domain; sequence YEGNCLCKAI…CIDDKPDCYD (115 aa). Cys8, Cys10, Cys27, Cys29, Cys32, Cys71, and Cys74 together coordinate Zn(2+).

It belongs to the Gfa family. Zn(2+) serves as cofactor.

It localises to the cytoplasm. The protein localises to the nucleus. This is an uncharacterized protein from Schizosaccharomyces pombe (strain 972 / ATCC 24843) (Fission yeast).